Consider the following 131-residue polypeptide: Small ribosomal subunit protein bS6 (131 aa).

Residues 98–131 (EASPMARARDERDSRRGPAGERSYDEAHAEEIGE) form a disordered region. The segment covering 104-131 (RARDERDSRRGPAGERSYDEAHAEEIGE) has biased composition (basic and acidic residues).

The protein belongs to the bacterial ribosomal protein bS6 family.

In terms of biological role, binds together with bS18 to 16S ribosomal RNA. This Shewanella putrefaciens (strain CN-32 / ATCC BAA-453) protein is Small ribosomal subunit protein bS6.